The following is a 640-amino-acid chain: Fructose-1,6-bisphosphatase class 3 (640 aa).

It belongs to the FBPase class 3 family. The cofactor is Mn(2+).

It carries out the reaction beta-D-fructose 1,6-bisphosphate + H2O = beta-D-fructose 6-phosphate + phosphate. It functions in the pathway carbohydrate biosynthesis; gluconeogenesis. This is Fructose-1,6-bisphosphatase class 3 from Lactococcus lactis subsp. lactis (strain IL1403) (Streptococcus lactis).